The primary structure comprises 813 residues: Sodium/hydrogen exchanger 2 (813 aa).

The next 7 membrane-spanning stretches (helical) occupy residues 108 to 128, 139 to 159, 170 to 190, 210 to 230, 238 to 258, 279 to 299, and 309 to 329; these read IVPESCLLIMVGLLLGGIIFG, TDVFFLYLLPPIVLDAGYFMP, IFWYAVVGTLWNSIGIGLSLF, LFGSLISAVDPVAVLAVFENI, ILVFGESLLNDAVTVVLYNLF, FFVVGIGGVLIGILLGFIAAF, and VIEPLFVFLYSYLSYITAEMF. Residue asparagine 351 is glycosylated (N-linked (GlcNAc...) asparagine). 4 helical membrane passes run 362-382, 393-413, 431-451, and 460-480; these read YFMKMLSSVSETLIFIFMGVS, AFVCFTLAFCLIWRALGVFVL, FIIAYGGLRGAICFALVFLLP, and LFITAAIVVIFFTVFILGITI. Basic and acidic residues predominate over residues 649-661; it reads LRKDNSLNRERRA. 2 disordered regions span residues 649–709 and 736–813; these read LRKD…NLQP and DVGS…NEKP. Polar residues predominate over residues 687 to 696; sequence VSNADGNSSD. 2 stretches are compositionally biased toward basic and acidic residues: residues 770 to 781 and 797 to 813; these read KDQRFGRGREDS and RASEPGNRKGRLGNEKP.

It belongs to the monovalent cation:proton antiporter 1 (CPA1) transporter (TC 2.A.36) family. As to quaternary structure, interacts with CHP1 and CHP2. Predominantly in small intestine, colon, and stomach, with much lower levels in skeletal muscle, kidney, brain, testis, uterus, heart and lung.

It is found in the apical cell membrane. It catalyses the reaction Na(+)(in) + H(+)(out) = Na(+)(out) + H(+)(in). Its activity is regulated as follows. Li(+) activates Na(+)/H(+) exchanger. Functionally, plasma membrane Na(+)/H(+) antiporter. Mediates the electroneutral exchange of intracellular H(+) ions for extracellular Na(+). Major apical Na(+)/H(+) exchanger in the base of the colonic crypt. Controls in the colonic crypt intracellular pH (pHi) to direct colonic epithelial cell differentiation into the absorptive enterocyte lineage at the expense of the secretory lineage. This Rattus norvegicus (Rat) protein is Sodium/hydrogen exchanger 2 (Slc9a2).